Consider the following 538-residue polypeptide: Putative cysteine ligase BshC (538 aa).

Residues 460-484 (KINEQIELLERMLKRNVEKKHEVEL) are a coiled coil.

This sequence belongs to the BshC family.

Involved in bacillithiol (BSH) biosynthesis. May catalyze the last step of the pathway, the addition of cysteine to glucosamine malate (GlcN-Mal) to generate BSH. The protein is Putative cysteine ligase BshC of Bacillus cereus (strain AH820).